The following is a 218-amino-acid chain: GTP cyclohydrolase 1 (218 aa).

Zn(2+)-binding residues include Cys-109, His-112, and Cys-180.

It belongs to the GTP cyclohydrolase I family. Toroid-shaped homodecamer, composed of two pentamers of five dimers.

The enzyme catalyses GTP + H2O = 7,8-dihydroneopterin 3'-triphosphate + formate + H(+). Its pathway is cofactor biosynthesis; 7,8-dihydroneopterin triphosphate biosynthesis; 7,8-dihydroneopterin triphosphate from GTP: step 1/1. This is GTP cyclohydrolase 1 from Aeromonas salmonicida (strain A449).